The sequence spans 1379 residues: Partitioning defective protein 3 (1379 aa).

A compositionally biased stretch (low complexity) spans 1–23; sequence MSASSTSSSSTSCPEGGEPSGSC. Disordered stretches follow at residues 1–32 and 208–335; these read MSASSTSSSSTSCPEGGEPSGSCKSSDEGEST and YNVG…SDRK. 2 stretches are compositionally biased toward polar residues: residues 239 to 256 and 272 to 284; these read SFDQIPQSGLRVSTPKPS and ILRSSLRTEASGS. 2 stretches are compositionally biased toward basic and acidic residues: residues 302 to 315 and 322 to 335; these read EVEKKLAEQDERKS and DKNPGRFARGSDRK. 2 PDZ domains span residues 381 to 483 and 515 to 599; these read LVTF…IINR and VVEL…SRVS. Residues 606–626 are a coiled coil; it reads TSASSENKENEETLKVVEEEK. The 92-residue stretch at 659–750 folds into the PDZ 3 domain; it reads VIPFINGSSS…EVGMISSNVR (92 aa). 5 disordered regions span residues 767 to 873, 887 to 918, 949 to 1085, 1273 to 1301, and 1350 to 1379; these read DLSR…MGAA, HQRQNSAPTSSTQKRSKSQPRSSSQRNYRSPM, QSME…GGNV, VEPVSGSSASATDRRGRSTSSGAVASGSS, and AYETRGGGAGGSPSQYRRRDQGPPHRFPQY. 2 stretches are compositionally biased toward low complexity: residues 776–786 and 798–826; these read SSPSPSSRMSS and ATRGTSSSGADSSHSRQSSASSAVPAVPA. Composition is skewed to basic and acidic residues over residues 828–844 and 854–869; these read LTERDSIVSDGTSRNDE and FNREGLGRKSLSEKRG. A compositionally biased stretch (low complexity) spans 894–912; it reads PTSSTQKRSKSQPRSSSQR. A compositionally biased stretch (polar residues) spans 967–977; that stretch reads QIPTGSSSKVQ. Composition is skewed to basic and acidic residues over residues 1030–1040 and 1048–1060; these read KSRDASPEKTP and SVERPKSIIDERN. The segment covering 1290-1301 has biased composition (low complexity); sequence STSSGAVASGSS.

It belongs to the PAR3 family. As to quaternary structure, required, together with pkc-3, for the localization of par-6; par-6 is involved in localizing/maintaining par-3 at the cell periphery. Interacts with par-6 and pkc-3 for localization at the periphery of anterior cortex of the embryo. Asymmetrically distributed at the periphery of the zygote and in dividing blastomeres of the germline lineage. Coexpressed with par-6; patchy expression observed at the periphery after completion of meiosis I and in meiosis II. On completion of metaphase II, expression is restricted to the anterior 85% of embryo length; this decreases to 55% in embryos between prophase and telophase of the first mitosis. During the first cleavage, expression is detected in the advancing furrow. Transiently coexpressed and colocalized asymmetrically with par-6 and pkc-3, in the developing somatic gonad, including the spermathecal precursor cells of L4 larvae.

It is found in the cytoplasm. Its function is as follows. In cooperation with pkc-3, required for establishing cell polarity and regulating spindle orientation in the early embryo. Localization is crucial for recruiting par-6 and pkc-3 to the peripheral apical cortex and restricting par-2 to basolateral surfaces. Necessary for apicobasal and anterior-posterior asymmetries associated with cell adhesion and gastrulation during the first few cycles of embryogenesis, and also for epithelial cell polarity in the distal spermatheca. Regulates the asymmetric localization of csnk-1, ppk-1 and gpr-1/2 during the first embryonic division. The protein is Partitioning defective protein 3 of Caenorhabditis elegans.